The primary structure comprises 306 residues: Glutaminase (306 aa).

Substrate is bound by residues Ser64, Asn115, Glu159, Asn166, Tyr190, Tyr242, and Val260.

This sequence belongs to the glutaminase family. In terms of assembly, homotetramer.

It catalyses the reaction L-glutamine + H2O = L-glutamate + NH4(+). This Photobacterium profundum (strain SS9) protein is Glutaminase.